The primary structure comprises 333 residues: Quinolinate synthase (333 aa).

Positions 41 and 58 each coordinate iminosuccinate. C103 provides a ligand contact to [4Fe-4S] cluster. Iminosuccinate is bound by residues 129 to 131 (YIN) and S146. Residue C189 participates in [4Fe-4S] cluster binding. Iminosuccinate is bound by residues 215–217 (HPE) and T232. C282 contacts [4Fe-4S] cluster.

The protein belongs to the quinolinate synthase family. Type 2 subfamily. [4Fe-4S] cluster is required as a cofactor.

The protein resides in the cytoplasm. The enzyme catalyses iminosuccinate + dihydroxyacetone phosphate = quinolinate + phosphate + 2 H2O + H(+). Its pathway is cofactor biosynthesis; NAD(+) biosynthesis; quinolinate from iminoaspartate: step 1/1. In terms of biological role, catalyzes the condensation of iminoaspartate with dihydroxyacetone phosphate to form quinolinate. In Prochlorococcus marinus (strain MIT 9313), this protein is Quinolinate synthase.